Consider the following 72-residue polypeptide: Small, acid-soluble spore protein 1 (72 aa).

This sequence belongs to the alpha/beta-type SASP family.

Its function is as follows. SASP are bound to spore DNA. They are double-stranded DNA-binding proteins that cause DNA to change to an a-like conformation. They protect the DNA backbone from chemical and enzymatic cleavage and are thus involved in dormant spore's high resistance to UV light. The sequence is that of Small, acid-soluble spore protein 1 (Sh-1) from Halobacillus halophilus (strain ATCC 35676 / DSM 2266 / JCM 20832 / KCTC 3685 / LMG 17431 / NBRC 102448 / NCIMB 2269) (Sporosarcina halophila).